A 533-amino-acid chain; its full sequence is Probable ribonuclease ZC3H12D (533 aa).

The RNase NYN domain maps to 92–246 (LRPIVIDGSN…PLGRRGPTLS (155 aa)). Residues 251–282 (KKPRPPEPSWQHCPYGKKCTYGVKCRFYHPER) form a C3H1-type zinc finger. The interval 262–368 (HCPYGKKCTY…ASGVVSQSRG (107 aa)) is necessary for interaction with ZC3H12A. A disordered region spans residues 302 to 335 (LGGGAEEPRTPSARSRPTTARLLPQEPGEHDLPP).

It belongs to the ZC3H12 family. As to quaternary structure, interacts with ZC3H12A. Mg(2+) serves as cofactor. Expressed at low levels in bone marrow derived macrophages.

It is found in the cytoplasm. The protein resides in the P-body. In terms of biological role, may regulate cell growth likely by suppressing RB1 phosphorylation. May function as RNase and regulate the levels of target RNA species (Potential). In association with ZC3H12A enhances the degradation of interleukin IL-6 mRNA level in activated macrophages. Serve as a tumor suppressor in certain leukemia cells. Overexpression inhibits the G1 to S phase progression through suppression of RB1 phosphorylation. This is Probable ribonuclease ZC3H12D from Mus musculus (Mouse).